A 2211-amino-acid polypeptide reads, in one-letter code: MALPRLTGALRSFSNVTRHDDYSEELADLTTKRTKQQEQLLKSDLTWKKIIKFVDDNLDKKEYQTVNGDLKTILQAAKQIVGAENGQEAIESGAVFLFKTFHRKECVGHDETKAIKQMFGPFPSSSATAACNATCRIASHFTEEQLTALIQMAEEQNGDNRVFFGKNIVFSFDMHDLDHSEELPVNGEADAQRIISLDYKKFLNNQLDHLKNCCDEKSDLKSLGKVDDSFLWSEVGKYLNESQGGTPGGPTTEDLCCTLYEMLASPKSGDELQNELFELLGPEGFELIEKLLQNRSVIVERSLTCQNDNKFQTLQEQCKKFIGENAKPNYGCQVTIQSEQEKLLMKQYRREEKRNARREKQAGEDGEVSGEGLLCFDPKELRLQRELALLNARSVPILGRQREVDLERIHYPHVYDSRAEAMKTSAFIGGAKVFLPESVQRENNKMYEEVKIPHSEPMPIGIEEKIVYIKDLDEIGQLAFKGMKRLNRIQSIVFETAYNTNENMLICAPTGAGKTNIAMLTVLHEIRQHVQHGVIKKDEFKIVYVAPMKALAAEMTNYFSKRLEPLGITVKELTGDMQLSKGEILRTQMLVTTPEKWDVVTRKSVGDVALSQLVKLLILDEVHLLHEDRGPVLESIVARTLRQVESTQSMIRILGLSATLPNYLDVATFLHVNPYIGLFYFDSRFRPVPLGQTFIGIKTTNKVQQLNHMDEVCYENVLKQIMAGHQVMVFVHARNATVRTAMALREKAKNNGHICHFLSPQGSDYGQAEKQVQRSRNKQLRELFPDGFSIHHAGMLRQDRSLVENLFSNGHIKVLVCTATLAWGVNLPAHAVVIKGTQIYAAKRGSFVDLGILDVMQIFGRAGRPQFDKFGEGIIITTHDKLSHYLTLLTQQNPIESQFLESLADNLNAEIALGTVTNVEEAVKWISYTYLYVRMRANPLVYGISHKAYQMDPGLEKHREQLVIEVGRKLDKARMIRFEERTGFFSSTDLGRTASHYYIKYNTIETFNELFDAHKTEGDILAIVSKAEEFEQIKVREEEIEELDTLLNDFCELPAPGGVENNYGKINILLQTYISRGELDSFSLISDSAYVAQNAARIVRALFEIALRKRWPAMTYRLLNLSKVIDKRLWGWVSPLRQFSVLPPSVLSKLEEKNLTVDKMKDMRKDEIGHMLHHVKIGLKVKQCVHQIPSIAMEATIQPITRTVLRVRLNITPDFTWNDQVHGTVGEPWWIWVEDPTNDHIYHSEYFIIQKKQVITKEPQLLVFTIPIFEPLPSQYYIRAVSDRWLGAEAVCIINFQHLILPERHPPHTELLDLQPLPVTALGHPEYEVLYKFTHFNPIQTQIFHTLYHTDCNVLLGAPTGSGKTVAAELAIFRVFNKYPTSKAVYIAPLKALVRERIEDWKVRIEEKLGKKVVELTGDVTPDMRAIAQADLIVTTPEKWDGVSRSWQNRSYVQKVSILIIDEIHLLGDERGPVLEVIVSRTNFISSHTEKPVRVVGLSTALANARDLADWLNINQMGLFNFRPSVRPVPLEVHIQGFPGQHYCPRMARMNKPAFQAIRSHSPAKPVLIFVSSRRQTRLTSLDLIAFLATEDDPKQWLKMDEREMNDIIGTVRDSNLKLTLAFGIGMHHAGLHERDRKTVEELFVNCKIQVLIATSTLAWGVNFPAHLVIVKGTEYYDGKTRRYVDYPITDVLQMMGRAGRPQFDDQGKAVILVHDIKKDFYKKFLYEPFPVESSLLDVLADHLNAEIAAGTITSKQDAMDYITWTYFFRRLIMNPTYYNLDNVSHDTMNKYLSSLVEKSLFDLECSYCIEIGEDNRTIEPLTYGRIASYYYLKHPTIGMFKDQLKPESSVEELLLILTNADEYTDLPVRHNEDQMNSELAKHLPIEVNPHSFDSSHTKTHLLLQAHFSHAILPCPDYATDTKTVLDQAIRICQAMLDVTAHHGWLVAALNITNLVQMVVQGRWIHDSSLLTVPNIEVQHLYLFQKWSQQKRKSVHGGYQGPIECLPELMAACEGKEDVFASIVDSELQTAHISQAWNFLSRLPILNVSLSIKGCWDDPAQPQNEVPVPCLTADTRDNKRWIKLHADQEYVLQIHLQRTQMGYQGKQDSKAVAPRFPKVKDEGWFLILGEVDKKELIALKRTGYVRNRNTVSVAFYTPETPGKCIYTLYLMSDSYLGMDQQYDIYLNIIPTSTSAQATTEVSDAMSYLTLK.

One can recognise a Helicase ATP-binding 1 domain in the interval 495 to 678 (ETAYNTNENM…FLHVNPYIGL (184 aa)). Residue 508–515 (APTGAGKT) participates in ATP binding. Residues 620-623 (DEVH) carry the DEVH box motif. A Helicase C-terminal 1 domain is found at 717-923 (VLKQIMAGHQ…GTVTNVEEAV (207 aa)). An SEC63 1 domain is found at 987–1296 (STDLGRTASH…GAEAVCIINF (310 aa)). Residues 1345-1520 (HTLYHTDCNV…WLNINQMGLF (176 aa)) form the Helicase ATP-binding 2 domain. 1358–1365 (APTGSGKT) is an ATP binding site. Residues 1462 to 1465 (DEIH) carry the DEIH box motif. The Helicase C-terminal 2 domain maps to 1553 to 1760 (PAFQAIRSHS…GTITSKQDAM (208 aa)). Positions 1821–2184 (PLTYGRIASY…YLGMDQQYDI (364 aa)) constitute an SEC63 2 domain.

The protein belongs to the helicase family.

The protein localises to the nucleus. The protein resides in the nucleus speckle. Its subcellular location is the cytoplasm. It localises to the cytosol. It catalyses the reaction Couples ATP hydrolysis with the unwinding of duplex DNA by translocating in the 3'-5' direction.. The catalysed reaction is ATP + H2O = ADP + phosphate + H(+). 3'-5' DNA helicase involved in repair of alkylated DNA. Promotes DNA unwinding to generate single-stranded substrate needed for ALKBH3, enabling ALKBH3 to process alkylated N3-methylcytosine (3mC) within double-stranded regions. Also involved in activation of the ribosome quality control (RQC) pathway, a pathway that degrades nascent peptide chains during problematic translation. Drives the splitting of stalled ribosomes. The sequence is that of Activating signal cointegrator 1 complex subunit 3 (ascc3) from Gallus gallus (Chicken).